A 177-amino-acid polypeptide reads, in one-letter code: Large ribosomal subunit protein uL6 (177 aa).

It belongs to the universal ribosomal protein uL6 family. As to quaternary structure, part of the 50S ribosomal subunit.

This protein binds to the 23S rRNA, and is important in its secondary structure. It is located near the subunit interface in the base of the L7/L12 stalk, and near the tRNA binding site of the peptidyltransferase center. The protein is Large ribosomal subunit protein uL6 of Tolumonas auensis (strain DSM 9187 / NBRC 110442 / TA 4).